The chain runs to 63 residues: Ct-IT2 (63 aa).

An LCN-type CS-alpha/beta domain is found at 1 to 63 (KDGYPMDSKG…VWDKATNKCG (63 aa)). Intrachain disulfides connect C11/C62, C15/C36, C22/C43, and C26/C45. Glycine amide is present on G63.

As to expression, expressed by the venom gland.

The protein localises to the secreted. Its function is as follows. Beta toxins bind voltage-independently at site-4 of sodium channels (Nav) and shift the voltage of activation toward more negative potentials thereby affecting sodium channel activation and promoting spontaneous and repetitive firing. Is highly active on insects, since it provokes paralysis and death when injected into crickets. The chain is Ct-IT2 from Centruroides tecomanus (Scorpion).